A 201-amino-acid polypeptide reads, in one-letter code: FMN-dependent NADH:quinone oxidoreductase (201 aa).

92-95 (MWNL) contributes to the FMN binding site.

The protein belongs to the azoreductase type 1 family. In terms of assembly, homodimer. Requires FMN as cofactor.

It catalyses the reaction 2 a quinone + NADH + H(+) = 2 a 1,4-benzosemiquinone + NAD(+). The enzyme catalyses N,N-dimethyl-1,4-phenylenediamine + anthranilate + 2 NAD(+) = 2-(4-dimethylaminophenyl)diazenylbenzoate + 2 NADH + 2 H(+). Functionally, quinone reductase that provides resistance to thiol-specific stress caused by electrophilic quinones. Its function is as follows. Also exhibits azoreductase activity. Catalyzes the reductive cleavage of the azo bond in aromatic azo compounds to the corresponding amines. This is FMN-dependent NADH:quinone oxidoreductase from Caldicellulosiruptor saccharolyticus (strain ATCC 43494 / DSM 8903 / Tp8T 6331).